The chain runs to 242 residues: NADPH-dependent pterin aldehyde reductase (242 aa).

Threonine 2 is modified (N-acetylthreonine). Residue leucine 21 to serine 50 participates in NADP(+) binding. Serine 153 is a binding site for substrate. Residue tyrosine 166 is the Proton acceptor of the active site. Lysine 170 contacts NADP(+).

The protein belongs to the short-chain dehydrogenases/reductases (SDR) family. As to quaternary structure, homodimer. In terms of tissue distribution, mostly expressed in seeds, and, to a lower extent, in roots, leaves, flowers and siliques.

The protein localises to the cytoplasm. Its function is as follows. NADPH-dependent pterin aldehyde reductase involved in pterin aldehyde salvage during folate turnover. Catalyzes the reduction of diverse aromatic and aliphatic aldehydes (e.g. acetaldehyde, n-propanal, 1-naphthaldehyde, benzaldehyde, cinnamaldehyde, n-butanal, n-hexanal, n-pentanal, 2-naphthaldehyde, n-octanal, n-nonanal and n-heptanal), in addition to the conversion of pterin-6-aldehyde (PtCHO) to 6-hydroxymethylpterin (PtCH(2)OH), and the conversion of dihydropterin-6-aldehyde (H(2)PtCHO) to 6-hydroxymethyldihydropterin (H(2)PtCH(2)OH). Cannot reduce the pterin ring. The chain is NADPH-dependent pterin aldehyde reductase from Arabidopsis thaliana (Mouse-ear cress).